Here is a 1406-residue protein sequence, read N- to C-terminus: DNA-directed RNA polymerase subunit beta' (1406 aa).

Zn(2+) contacts are provided by cysteine 72, cysteine 74, cysteine 87, and cysteine 90. The Mg(2+) site is built by aspartate 462, aspartate 464, and aspartate 466. The Zn(2+) site is built by cysteine 816, cysteine 891, cysteine 898, and cysteine 901.

This sequence belongs to the RNA polymerase beta' chain family. In terms of assembly, the RNAP catalytic core consists of 2 alpha, 1 beta, 1 beta' and 1 omega subunit. When a sigma factor is associated with the core the holoenzyme is formed, which can initiate transcription. Mg(2+) serves as cofactor. It depends on Zn(2+) as a cofactor.

It carries out the reaction RNA(n) + a ribonucleoside 5'-triphosphate = RNA(n+1) + diphosphate. Its function is as follows. DNA-dependent RNA polymerase catalyzes the transcription of DNA into RNA using the four ribonucleoside triphosphates as substrates. In Psychrobacter arcticus (strain DSM 17307 / VKM B-2377 / 273-4), this protein is DNA-directed RNA polymerase subunit beta'.